We begin with the raw amino-acid sequence, 348 residues long: Ion-translocating oxidoreductase complex subunit D (348 aa).

Transmembrane regions (helical) follow at residues 15–35, 36–56, 67–87, 88–108, and 125–145; these read LTAK…GMQA, YFFG…AVAI, LTAF…LAIS, IPPY…LLLA, and VAYA…LVPI. Thr186 bears the FMN phosphoryl threonine mark. 5 helical membrane passes run 212–232, 241–261, 265–285, 298–318, and 320–340; these read LFAN…LLLI, IPAA…LLLP, LNVV…FIAT, LIFG…GNYP, and AVAF…HYTQ.

Belongs to the NqrB/RnfD family. As to quaternary structure, the complex is composed of six subunits: RnfA, RnfB, RnfC, RnfD, RnfE and RnfG. Requires FMN as cofactor.

The protein resides in the cell inner membrane. In terms of biological role, part of a membrane-bound complex that couples electron transfer with translocation of ions across the membrane. This Actinobacillus pleuropneumoniae serotype 3 (strain JL03) protein is Ion-translocating oxidoreductase complex subunit D.